The chain runs to 360 residues: Phospho-N-acetylmuramoyl-pentapeptide-transferase (360 aa).

10 helical membrane-spanning segments follow: residues 26–46 (AILS…IMIK), 70–90 (GTPT…ILLW), 94–114 (SNPY…VGFV), 132–152 (WKYF…YAYG), 168–188 (VMPQ…VGTS), 199–219 (GLAI…AWAT), 236–256 (ASEL…FLWF), 263–283 (VFMG…IAVL), 288–308 (LVLV…ILQV), and 338–358 (VIVR…ATLK).

This sequence belongs to the glycosyltransferase 4 family. MraY subfamily. The cofactor is Mg(2+).

The protein resides in the cell inner membrane. It catalyses the reaction UDP-N-acetyl-alpha-D-muramoyl-L-alanyl-gamma-D-glutamyl-meso-2,6-diaminopimeloyl-D-alanyl-D-alanine + di-trans,octa-cis-undecaprenyl phosphate = di-trans,octa-cis-undecaprenyl diphospho-N-acetyl-alpha-D-muramoyl-L-alanyl-D-glutamyl-meso-2,6-diaminopimeloyl-D-alanyl-D-alanine + UMP. Its pathway is cell wall biogenesis; peptidoglycan biosynthesis. In terms of biological role, catalyzes the initial step of the lipid cycle reactions in the biosynthesis of the cell wall peptidoglycan: transfers peptidoglycan precursor phospho-MurNAc-pentapeptide from UDP-MurNAc-pentapeptide onto the lipid carrier undecaprenyl phosphate, yielding undecaprenyl-pyrophosphoryl-MurNAc-pentapeptide, known as lipid I. The chain is Phospho-N-acetylmuramoyl-pentapeptide-transferase from Vibrio parahaemolyticus serotype O3:K6 (strain RIMD 2210633).